The sequence spans 611 residues: Chaperone protein HscA (611 aa).

This sequence belongs to the heat shock protein 70 family.

In terms of biological role, chaperone involved in the maturation of iron-sulfur cluster-containing proteins. Has a low intrinsic ATPase activity which is markedly stimulated by HscB. Involved in the maturation of IscU. The sequence is that of Chaperone protein HscA from Buchnera aphidicola subsp. Acyrthosiphon pisum (strain 5A).